The primary structure comprises 333 residues: Atrochrysone carboxyl ACP thioesterase (333 aa).

Histidine 104, histidine 106, aspartate 108, and histidine 109 together coordinate Zn(2+). The active-site Proton donor/acceptor is aspartate 108.

The protein belongs to the metallo-beta-lactamase superfamily. Zn(2+) serves as cofactor.

The catalysed reaction is atrochrysone carboxyl-[ACP] + H2O = atrochrysone carboxylate + holo-[ACP] + H(+). The protein operates within pigment biosynthesis. Its function is as follows. Atrochrysone carboxyl ACP thioesterase; part of the gene cluster that mediates the biosynthesis of the bianthraquinone cladofulvin, a conidial pigment not required for virulence but that plays a role in fitness and resistance to environmental stresses including UV light and low-temperature stress. The pathway begins with the synthesis of atrochrysone thioester by the polyketide synthase (PKS) claG. The atrochrysone carboxyl ACP thioesterase claF then breaks the thioester bond and releases the atrochrysone carboxylic acid from claG. This compound is decarboxylated by claH to yield emodin, which is further converted to chrysophanol hydroquinone by the reductase claC and the dehydratase claB. The cytochrome P450 monooxygenase claM then catalyzes the dimerization of nataloe-emodin to cladofulvin. The protein is Atrochrysone carboxyl ACP thioesterase of Passalora fulva (Tomato leaf mold).